We begin with the raw amino-acid sequence, 558 residues long: Protein NRT1/ PTR FAMILY 2.3 (558 aa).

12 helical membrane-spanning segments follow: residues T33–I53, V69–F89, I92–I112, V128–V148, F176–V196, S203–V223, L329–L349, V371–M391, L403–V423, V439–A459, S478–I498, and V517–W537.

This sequence belongs to the major facilitator superfamily. Proton-dependent oligopeptide transporter (POT/PTR) (TC 2.A.17) family. In terms of tissue distribution, expressed in flowers, siliques and root epidermis or cortex. Detected in shoots.

It localises to the membrane. Functionally, transporter involved in a passive nitrate efflux. This chain is Protein NRT1/ PTR FAMILY 2.3 (NPF2.3), found in Arabidopsis thaliana (Mouse-ear cress).